The primary structure comprises 132 residues: Large ribosomal subunit protein uL22c (132 aa).

Belongs to the universal ribosomal protein uL22 family. In terms of assembly, part of the 50S ribosomal subunit.

It is found in the plastid. The protein localises to the chloroplast. In terms of biological role, this protein binds specifically to 23S rRNA. The globular domain of the protein is located near the polypeptide exit tunnel on the outside of the subunit, while an extended beta-hairpin is found that lines the wall of the exit tunnel in the center of the 70S ribosome. In Staurastrum punctulatum (Green alga), this protein is Large ribosomal subunit protein uL22c (rpl22).